Here is a 146-residue protein sequence, read N- to C-terminus: D-aminoacyl-tRNA deacylase (146 aa).

The short motif at 137–138 is the Gly-cisPro motif, important for rejection of L-amino acids element; it reads GP.

Belongs to the DTD family. In terms of assembly, homodimer.

It localises to the cytoplasm. The catalysed reaction is glycyl-tRNA(Ala) + H2O = tRNA(Ala) + glycine + H(+). It carries out the reaction a D-aminoacyl-tRNA + H2O = a tRNA + a D-alpha-amino acid + H(+). In terms of biological role, an aminoacyl-tRNA editing enzyme that deacylates mischarged D-aminoacyl-tRNAs. Also deacylates mischarged glycyl-tRNA(Ala), protecting cells against glycine mischarging by AlaRS. Acts via tRNA-based rather than protein-based catalysis; rejects L-amino acids rather than detecting D-amino acids in the active site. By recycling D-aminoacyl-tRNA to D-amino acids and free tRNA molecules, this enzyme counteracts the toxicity associated with the formation of D-aminoacyl-tRNA entities in vivo and helps enforce protein L-homochirality. The sequence is that of D-aminoacyl-tRNA deacylase from Thermodesulfovibrio yellowstonii (strain ATCC 51303 / DSM 11347 / YP87).